The chain runs to 442 residues: Protein trichome birefringence-like 26 (442 aa).

A helical; Signal-anchor for type II membrane protein membrane pass occupies residues Phe51–Val71. The short motif at Gly164–Ser166 is the GDS motif element. The DCXHWCLPGXXDXWN motif motif lies at Asp409 to Asn423.

This sequence belongs to the PC-esterase family. TBL subfamily.

It localises to the membrane. In terms of biological role, may be involved in the O-acetylation of mannan. May act as a bridging protein that binds pectin and other cell wall polysaccharides. Probably involved in maintaining esterification of pectins. The sequence is that of Protein trichome birefringence-like 26 (TBL26) from Arabidopsis thaliana (Mouse-ear cress).